A 457-amino-acid polypeptide reads, in one-letter code: Aromatic amino acid transport protein AroP (457 aa).

Residues 1-19 lie on the Cytoplasmic side of the membrane; it reads MMEGQQHGEQLKRGLKNRH. A helical membrane pass occupies residues 20-40; it reads IQLIALGGAIGTGLFLGSASV. Over 41-42 the chain is Periplasmic; the sequence is IQ. A helical membrane pass occupies residues 43–63; that stretch reads SAGPGIILGYAIAGFIAFLIM. At 64–86 the chain is on the cytoplasmic side; the sequence is RQLGEMVVEEPVAGSFSHFAYKY. Residues 87 to 107 form a helical membrane-spanning segment; sequence WGSFAGFASGWNYWVLYVLVA. Residues 108-117 are Periplasmic-facing; the sequence is MAELTAVGKY. Residues 118–138 traverse the membrane as a helical segment; that stretch reads IQFWYPEIPTWVSAAVFFVVI. The Cytoplasmic segment spans residues 139–155; that stretch reads NAINLTNVKVFGEMEFW. A helical transmembrane segment spans residues 156–176; the sequence is FAIIKVIAVVAMIIFGGWLLF. Topologically, residues 177–201 are periplasmic; it reads SGNGGPQASVSNLWDQGGFLPHGFT. Residues 202–222 form a helical membrane-spanning segment; it reads GLVMMMAIIMFSFGGLELVGI. Residues 223–240 lie on the Cytoplasmic side of the membrane; that stretch reads TAAEADNPEQSIPKATNQ. Residues 241–261 traverse the membrane as a helical segment; the sequence is VIYRILIFYIGSLAVLLSLMP. Over 262–271 the chain is Periplasmic; sequence WTRVTADTSP. Residues 272 to 292 traverse the membrane as a helical segment; it reads FVLIFHELGDTFVANALNIVV. Topologically, residues 293–333 are cytoplasmic; that stretch reads LTAALSVYNSCVYCNSRMLFGLAQQGNAPKALASVDKRGVP. Residues 334–354 form a helical membrane-spanning segment; it reads VNTILVSALVTALCVLINYLA. Over 355 to 358 the chain is Periplasmic; the sequence is PESA. Residues 359–379 form a helical membrane-spanning segment; sequence FGLLMALVVSALVINWAMISL. The Cytoplasmic portion of the chain corresponds to 380–399; sequence AHMKFRRAKQEQGVVTRFPA. The chain crosses the membrane as a helical span at residues 400–420; that stretch reads LLYPLGNWICLLFMAAVLVIM. The Periplasmic segment spans residues 421–425; it reads LMTPG. The helical transmembrane segment at 426-446 threads the bilayer; that stretch reads MAISVYLIPVWLIVLGIGYLF. At 447-457 the chain is on the cytoplasmic side; it reads KEKTAKAVKAH.

The protein belongs to the amino acid-polyamine-organocation (APC) superfamily. Amino acid transporter (AAT) (TC 2.A.3.1) family.

Its subcellular location is the cell inner membrane. It catalyses the reaction L-phenylalanine(in) + H(+)(in) = L-phenylalanine(out) + H(+)(out). It carries out the reaction L-tryptophan(in) + H(+)(in) = L-tryptophan(out) + H(+)(out). The catalysed reaction is L-tyrosine(in) + H(+)(in) = L-tyrosine(out) + H(+)(out). Its function is as follows. Permease that is involved in the active transport across the cytoplasmic membrane of all three aromatic amino acids, phenylalanine, tyrosine and tryptophan. The chain is Aromatic amino acid transport protein AroP (aroP) from Shigella flexneri.